Here is a 475-residue protein sequence, read N- to C-terminus: MAALTTLFKYIDENQDRYIKKLAKWVAIQSVSAWPEKRGEIRRMMEVAAADVKQLGGSVELVDIGKQKLPDGSEIPLPPILLGRLGSDPQKKTVCIYGHLDVQPAALEDGWDSEPFTLVERDGKLYGRGSTDDKGPVAGWINALEAYQKTGQEIPVNVRFCLEGMEESGSEGLDELIFARKDTFFKDVDYVCISDNYWLGKKKPCITYGLRGICYFFIEVECSNKDLHSGVYGGSVHEAMTDLILLMGSLVDKRGNILIPGINEAVAAVTEEEHKLYDDIDFDIEEFAKDVGAQILLHSHKKDILMHRWRYPSLSLHGIEGAFSGSGAKTVIPRKVVGKFSIRLVPNMTPEVVGEQVTSYLTKKFAELRSPNEFKVYMGHGGKPWVSDFSHPHYLAGRRAMKTVFGVEPDLTREGGSIPVTLTFQEATGKNVMLLPVGSADDGAHSQNEKLNRYNYIEGTKMLAAYLYEVSQLKD.

An N-acetylalanine modification is found at alanine 2. At lysine 9 the chain carries N6-acetyllysine. The residue at position 58 (serine 58) is a Phosphoserine. Histidine 99 contacts Mn(2+). Residue aspartate 101 is part of the active site. Aspartate 132 lines the Mn(2+) pocket. The Proton acceptor role is filled by glutamate 166. Residues glutamate 166 to glutamate 167, aspartate 195, and histidine 228 contribute to the substrate site. Residues glutamate 167 and aspartate 195 each coordinate Mn(2+). Residue serine 299 is modified to Phosphoserine. Substrate-binding residues include threonine 330, arginine 343, serine 417, and histidine 445. Histidine 445 lines the Mn(2+) pocket.

It belongs to the peptidase M20A family. Homodimer. The cofactor is Mn(2+). As to expression, ubiquitously expressed with higher levels in kidney and liver (at protein level). Expressed in peripheral blood leukocytes. Expressed in gastric mucosa and down-regulated in gastric cancer mucosal tissues (at protein level). Broadly expressed in fetal tissues. Expressed in adult liver and placenta.

The protein resides in the cytoplasm. The enzyme catalyses Hydrolysis of dipeptides, preferentially hydrophobic dipeptides including prolyl amino acids.. It carries out the reaction L-threonyl-L-threonine + H2O = 2 L-threonine. It catalyses the reaction L-threonyl-L-serine + H2O = L-threonine + L-serine. The catalysed reaction is L-seryl-L-threonine + H2O = L-threonine + L-serine. The enzyme catalyses L-cysteinylglycine + H2O = L-cysteine + glycine. It carries out the reaction L-alanyl-L-cysteine + H2O = L-cysteine + L-alanine. It catalyses the reaction (S)-lactate + L-phenylalanine = N-[(S)-lactoyl]-L-phenylalanine + H2O. With respect to regulation, inhibited by p-hydroxymercurybenzoate. The inhibitory concentration 50% (IC(50)) is 13 uM. Inhibited by bestatin. The inhibitory concentration 50% (IC(50)) is 7 nM at pH 9.5. Its function is as follows. Catalyzes the peptide bond hydrolysis in dipeptides, displaying a non-redundant activity toward threonyl dipeptides. Mediates threonyl dipeptide catabolism in a tissue-specific way. Has high dipeptidase activity toward cysteinylglycine, an intermediate metabolite in glutathione metabolism. Metabolizes N-lactoyl-amino acids, both through hydrolysis to form lactic acid and amino acids, as well as through their formation by reverse proteolysis. Plays a role in the regulation of cell cycle arrest and apoptosis. This is Cytosolic non-specific dipeptidase from Homo sapiens (Human).